Consider the following 147-residue polypeptide: Large ribosomal subunit protein bL9 (147 aa).

It belongs to the bacterial ribosomal protein bL9 family.

Its function is as follows. Binds to the 23S rRNA. The protein is Large ribosomal subunit protein bL9 of Bacteroides fragilis (strain ATCC 25285 / DSM 2151 / CCUG 4856 / JCM 11019 / LMG 10263 / NCTC 9343 / Onslow / VPI 2553 / EN-2).